The chain runs to 2476 residues: Non-reducing polyketide synthase ausA (2476 aa).

The N-terminal acylcarrier protein transacylase domain (SAT) stretch occupies residues 14–253 (VLFGPKYPEV…HHSNHTQAVE (240 aa)). The Ketosynthase family 3 (KS3) domain maps to 379-795 (AVPIAVTGMA…GSNAAIVLRE (417 aa)). Residues cysteine 544, histidine 679, and histidine 718 each act as for beta-ketoacyl synthase activity in the active site. The tract at residues 906-1210 (ICFGGQTGDT…LPTDLSGAQA (305 aa)) is malonyl-CoA:ACP transacylase (MAT) domain. Serine 993 serves as the catalytic For acyl/malonyl transferase activity. Positions 1277-1405 (QEASLVRLLR…GRVSLQAAGS (129 aa)) are N-terminal hotdog fold. Positions 1277–1584 (QEASLVRLLR…FTGVSIQSLK (308 aa)) constitute a PKS/mFAS DH domain. A product template (PT) domain region spans residues 1280–1583 (SLVRLLRQDG…TFTGVSIQSL (304 aa)). The active-site Proton acceptor; for dehydratase activity is the histidine 1310. Residues 1433-1584 (SSSGLKRSTV…FTGVSIQSLK (152 aa)) form a C-terminal hotdog fold region. Aspartate 1491 acts as the Proton donor; for dehydratase activity in catalysis. A Carrier domain is found at 1626–1700 (DGDLLAVQTM…GLVQRIFPGH (75 aa)). Serine 1660 bears the O-(pantetheine 4'-phosphoryl)serine mark. A methyltransferase (CMeT) domain region spans residues 1862 to 2095 (QHASEHKLLH…GFNWVDWTDN (234 aa)). Residues 2128–2476 (NTVQEQTVLY…YEFLRRHVGL (349 aa)) form a thioesterase (TE) domain region. Residues serine 2251, aspartate 2413, and histidine 2445 each act as for thioesterase activity in the active site.

The catalysed reaction is 3 malonyl-CoA + acetyl-CoA + 2 S-adenosyl-L-methionine = 3,5-dimethylorsellinate + 2 S-adenosyl-L-homocysteine + 3 CO2 + 4 CoA. It participates in secondary metabolite biosynthesis; terpenoid biosynthesis. Non-reducing polyketide synthase; part of the gene cluster A that mediates the biosynthesis of austinol and dehydroaustinol, two fungal meroterpenoids. The first step of the pathway is the synthesis of 3,5-dimethylorsellinic acid by the polyketide synthase ausA. 3,5-dimethylorsellinic acid is then prenylated by the polyprenyl transferase ausN. Further epoxidation by the FAD-dependent monooxygenase ausM and cyclization by the probable terpene cyclase ausL lead to the formation of protoaustinoid A. Protoaustinoid A is then oxidized to spiro-lactone preaustinoid A3 by the combined action of the FAD-binding monooxygenases ausB and ausC, and the dioxygenase ausE. Acid-catalyzed keto-rearrangement and ring contraction of the tetraketide portion of preaustinoid A3 by ausJ lead to the formation of preaustinoid A4. The aldo-keto reductase ausK, with the help of ausH, is involved in the next step by transforming preaustinoid A4 into isoaustinone which is in turn hydroxylated by the P450 monooxygenase ausI to form austinolide. Finally, the cytochrome P450 monooxygenase ausG modifies austinolide to austinol. Austinol can be further modified to dehydroaustinol which forms a diffusible complex with diorcinol that initiates conidiation. Due to genetic rearrangements of the clusters and the subsequent loss of some enzymes, the end products of the Emericella nidulans austinoid biosynthesis clusters are austinol and dehydroaustinol, even if additional enzymes, such as the O-acetyltransferase ausQ and the cytochrome P450 monooxygenase ausR are still functional. The chain is Non-reducing polyketide synthase ausA from Emericella nidulans (strain FGSC A4 / ATCC 38163 / CBS 112.46 / NRRL 194 / M139) (Aspergillus nidulans).